The sequence spans 325 residues: Putative S-adenosyl-L-methionine-dependent methyltransferase MT0917 (325 aa).

S-adenosyl-L-methionine-binding positions include aspartate 126 and 155 to 156 (DL).

This sequence belongs to the UPF0677 family.

In terms of biological role, exhibits S-adenosyl-L-methionine-dependent methyltransferase activity. The polypeptide is Putative S-adenosyl-L-methionine-dependent methyltransferase MT0917 (Mycobacterium tuberculosis (strain CDC 1551 / Oshkosh)).